Here is a 269-residue protein sequence, read N- to C-terminus: MLTIADHQFSSRLLTGTGKFSNHNTMLQAIASSGSQLVTLAMKRIDLTRGHDNLLGPLQSMGVKLLPNTAGARNAKEAIFAAELAYEMLGTKWIKLEIHPDPKYLMPDPIETLIAAQHLCEKGYIVMPYVHADPVLCRRLEEVGCAAVMPLGSPIGSNQGLATETFLSIIIEQANIPVIVDAGIGAPSQACRAMEMGAAAVLVNTAIASSANPQQMAKCFADAVATGRQAYLAGLGAVNNHAHATSPLTGFLSEPSISSLAKSVNSKGG.

Catalysis depends on K95, which acts as the Schiff-base intermediate with DXP. 1-deoxy-D-xylulose 5-phosphate contacts are provided by residues G156, 182–183, and 204–205; these read AG and NT.

This sequence belongs to the ThiG family. As to quaternary structure, homotetramer. Forms heterodimers with either ThiH or ThiS.

The protein resides in the cytoplasm. It carries out the reaction [ThiS sulfur-carrier protein]-C-terminal-Gly-aminoethanethioate + 2-iminoacetate + 1-deoxy-D-xylulose 5-phosphate = [ThiS sulfur-carrier protein]-C-terminal Gly-Gly + 2-[(2R,5Z)-2-carboxy-4-methylthiazol-5(2H)-ylidene]ethyl phosphate + 2 H2O + H(+). It functions in the pathway cofactor biosynthesis; thiamine diphosphate biosynthesis. Its function is as follows. Catalyzes the rearrangement of 1-deoxy-D-xylulose 5-phosphate (DXP) to produce the thiazole phosphate moiety of thiamine. Sulfur is provided by the thiocarboxylate moiety of the carrier protein ThiS. In vitro, sulfur can be provided by H(2)S. The sequence is that of Thiazole synthase from Shewanella frigidimarina (strain NCIMB 400).